The primary structure comprises 255 residues: DNA repair protein RecO (255 aa).

Belongs to the RecO family.

Functionally, involved in DNA repair and RecF pathway recombination. This chain is DNA repair protein RecO, found in Listeria monocytogenes serotype 4b (strain CLIP80459).